The chain runs to 246 residues: Probable transcriptional regulatory protein Dshi_2762 (246 aa).

The protein belongs to the TACO1 family.

It localises to the cytoplasm. This Dinoroseobacter shibae (strain DSM 16493 / NCIMB 14021 / DFL 12) protein is Probable transcriptional regulatory protein Dshi_2762.